A 126-amino-acid polypeptide reads, in one-letter code: uncharacterized protein (126 aa).

This is an uncharacterized protein from Mycoplasmopsis pulmonis (strain UAB CTIP) (Mycoplasma pulmonis).